We begin with the raw amino-acid sequence, 951 residues long: Serine/threonine-protein kinase 10 (951 aa).

A Protein kinase domain is found at Trp36 to Val294. Residues Leu42 to Val50 and Lys65 contribute to the ATP site. The active-site Proton acceptor is the Asp157. Over residues Glu319 to Ser330 the composition is skewed to acidic residues. Residues Glu319–Ser479 form a disordered region. The segment covering Asp331–Ala343 has biased composition (polar residues). Residues Gly345–Val356 are compositionally biased toward basic and acidic residues. Positions Pro364–Ile373 are enriched in polar residues. 2 stretches are compositionally biased toward basic and acidic residues: residues His374–Val394 and His410–Gly427. Positions Ala429 to Arg443 are enriched in polar residues. A phosphoserine; by PLK1 mark is found at Ser483, Ser487, and Ser491. A coiled-coil region spans residues Glu583–Arg723. Positions Gln785 to Thr800 are enriched in basic and acidic residues. The segment at Gln785–Met804 is disordered. Residues Arg898–Glu928 adopt a coiled-coil conformation. The disordered stretch occupies residues Ala930–Ser951.

It belongs to the protein kinase superfamily. STE Ser/Thr protein kinase family. STE20 subfamily. Homodimer. In terms of processing, autophosphorylates. Phosphorylated by plk1/plx1, suggesting the existence of a feedback loop with plk1/plx1. activation of the protein.

Its subcellular location is the cell membrane. It catalyses the reaction L-seryl-[protein] + ATP = O-phospho-L-seryl-[protein] + ADP + H(+). It carries out the reaction L-threonyl-[protein] + ATP = O-phospho-L-threonyl-[protein] + ADP + H(+). May act as a polo kinase kinase by mediating phosphorylation of plk1/plx1 and subsequent activation of plk1/plx1 during oocyte maturation. In Xenopus tropicalis (Western clawed frog), this protein is Serine/threonine-protein kinase 10 (stk10).